Reading from the N-terminus, the 200-residue chain is Recombination protein RecR (200 aa).

The segment at 59-74 adopts a C4-type zinc-finger fold; the sequence is CEICGNIDTRSPCTVC. Residues 82 to 177 enclose the Toprim domain; that stretch reads SIIVVVADVA…KVTRLAHGVP (96 aa).

This sequence belongs to the RecR family.

Functionally, may play a role in DNA repair. It seems to be involved in an RecBC-independent recombinational process of DNA repair. It may act with RecF and RecO. This is Recombination protein RecR from Nitrobacter hamburgensis (strain DSM 10229 / NCIMB 13809 / X14).